Consider the following 238-residue polypeptide: Transcriptional activator protein AnoR (238 aa).

One can recognise an HTH luxR-type domain in the interval 170–236 (EFSQFNLYLT…SAAIRAVMLG (67 aa)). Residues 195–214 (SAEIAQIIGVTERTVNFHLC) constitute a DNA-binding region (H-T-H motif).

Belongs to the autoinducer-regulated transcriptional regulatory protein family.

Positively regulates the expression of anoI. Required for biofilm formation and motility. Probably part of a quorum-sensing system with AnoI. The sequence is that of Transcriptional activator protein AnoR from Acinetobacter nosocomialis.